Consider the following 219-residue polypeptide: Probable GTP-binding protein EngB (219 aa).

The EngB-type G domain occupies 40-212 (LLPEIAFIGK…KASLAKCIIK (173 aa)). Residues 48-55 (GKSNVGKS), 75-79 (GRTGQ), 93-96 (DLPG), 160-163 (TKFD), and 191-193 (VSS) each bind GTP. Mg(2+) is bound by residues Ser-55 and Thr-77.

The protein belongs to the TRAFAC class TrmE-Era-EngA-EngB-Septin-like GTPase superfamily. EngB GTPase family. Requires Mg(2+) as cofactor.

In terms of biological role, necessary for normal cell division and for the maintenance of normal septation. This chain is Probable GTP-binding protein EngB, found in Rickettsia canadensis (strain McKiel).